The chain runs to 750 residues: Photosystem I P700 chlorophyll a apoprotein A1 (750 aa).

8 helical membrane passes run 70–93 (VFSA…FHGA), 156–179 (LYCT…FHYH), 195–219 (LNHH…HVSL), 291–309 (IAHH…GHMY), 346–369 (WHAQ…HHMY), 385–411 (LSLF…IFMV), 433–455 (AIIS…LYIH), and 531–549 (FLVH…LILL). Residues Cys573 and Cys582 each coordinate [4Fe-4S] cluster. Transmembrane regions (helical) follow at residues 589–610 (HVFL…HFSW) and 664–686 (LSAY…MFLF). A chlorophyll a'-binding site is contributed by His675. Chlorophyll a-binding residues include Met683 and Tyr691. A phylloquinone-binding site is contributed by Trp692. The helical transmembrane segment at 724–744 (AVGVTHYLLGGIATTWAFFLA) threads the bilayer.

Belongs to the PsaA/PsaB family. The PsaA/B heterodimer binds the P700 chlorophyll special pair and subsequent electron acceptors. PSI consists of a core antenna complex that captures photons, and an electron transfer chain that converts photonic excitation into a charge separation. The eukaryotic PSI reaction center is composed of at least 11 subunits. P700 is a chlorophyll a/chlorophyll a' dimer, A0 is one or more chlorophyll a, A1 is one or both phylloquinones and FX is a shared 4Fe-4S iron-sulfur center. is required as a cofactor.

It is found in the plastid. The protein resides in the chloroplast thylakoid membrane. It carries out the reaction reduced [plastocyanin] + hnu + oxidized [2Fe-2S]-[ferredoxin] = oxidized [plastocyanin] + reduced [2Fe-2S]-[ferredoxin]. In terms of biological role, psaA and PsaB bind P700, the primary electron donor of photosystem I (PSI), as well as the electron acceptors A0, A1 and FX. PSI is a plastocyanin-ferredoxin oxidoreductase, converting photonic excitation into a charge separation, which transfers an electron from the donor P700 chlorophyll pair to the spectroscopically characterized acceptors A0, A1, FX, FA and FB in turn. Oxidized P700 is reduced on the lumenal side of the thylakoid membrane by plastocyanin. The protein is Photosystem I P700 chlorophyll a apoprotein A1 of Agrostis stolonifera (Creeping bentgrass).